The primary structure comprises 283 residues: Bifunctional protein FolD (283 aa).

Residues 165–167, S190, and V231 contribute to the NADP(+) site; that span reads GRS.

It belongs to the tetrahydrofolate dehydrogenase/cyclohydrolase family. In terms of assembly, homodimer.

The enzyme catalyses (6R)-5,10-methylene-5,6,7,8-tetrahydrofolate + NADP(+) = (6R)-5,10-methenyltetrahydrofolate + NADPH. The catalysed reaction is (6R)-5,10-methenyltetrahydrofolate + H2O = (6R)-10-formyltetrahydrofolate + H(+). It functions in the pathway one-carbon metabolism; tetrahydrofolate interconversion. Its function is as follows. Catalyzes the oxidation of 5,10-methylenetetrahydrofolate to 5,10-methenyltetrahydrofolate and then the hydrolysis of 5,10-methenyltetrahydrofolate to 10-formyltetrahydrofolate. This chain is Bifunctional protein FolD, found in Bacillus velezensis (strain DSM 23117 / BGSC 10A6 / LMG 26770 / FZB42) (Bacillus amyloliquefaciens subsp. plantarum).